Here is a 153-residue protein sequence, read N- to C-terminus: Interleukin-4 (153 aa).

The N-terminal stretch at 1-24 (MGLTSQLLPPLFFLLACAGNFVHG) is a signal peptide. 3 cysteine pairs are disulfide-bonded: cysteine 27/cysteine 151, cysteine 48/cysteine 89, and cysteine 70/cysteine 123. Asparagine 62 carries N-linked (GlcNAc...) asparagine glycosylation.

This sequence belongs to the IL-4/IL-13 family. Interacts with IL4R. Interacts with IL13RA1.

The protein resides in the secreted. Cytokine secreted primarily by mast cells, T-cells, eosinophils, and basophils that plays a role in regulating antibody production, hematopoiesis and inflammation, and the development of effector T-cell responses. Induces the expression of class II MHC molecules on resting B-cells. Enhances both secretion and cell surface expression of IgE and IgG1. Also regulates the expression of the low affinity Fc receptor for IgE (CD23) on both lymphocytes and monocytes. Positively regulates IL31RA expression in macrophages. Stimulates autophagy in dendritic cells by interfering with mTORC1 signaling and through the induction of RUFY4. In addition, plays a critical role in higher functions of the normal brain, such as memory and learning. Upon binding to IL4, IL4R receptor dimerizes either with the common IL2R gamma chain/IL2RG to produce the type 1 signaling complex, located mainly on hematopoietic cells, or with the IL13RA1 to produce the type 2 complex, which is also expressed on nonhematopoietic cells. Engagement of both types of receptors initiates JAK3 and to a lower extend JAK1 phosphorylation leading to activation of the signal transducer and activator of transcription 6/STAT6. In Homo sapiens (Human), this protein is Interleukin-4 (IL4).